A 331-amino-acid polypeptide reads, in one-letter code: GTP 3',8-cyclase (331 aa).

The Radical SAM core domain maps to 6 to 231; the sequence is PFGRTISYLR…TDIPFKTGGP (226 aa). Position 15 (Arg-15) interacts with GTP. [4Fe-4S] cluster contacts are provided by Cys-22 and Cys-26. Tyr-28 contributes to the S-adenosyl-L-methionine binding site. [4Fe-4S] cluster is bound at residue Cys-29. Arg-64 is a GTP binding site. Residue Gly-68 participates in S-adenosyl-L-methionine binding. Thr-98 contacts GTP. Ser-122 is a binding site for S-adenosyl-L-methionine. Lys-158 is a GTP binding site. Met-192 provides a ligand contact to S-adenosyl-L-methionine. Residues Cys-255 and Cys-258 each contribute to the [4Fe-4S] cluster site. 260–262 contacts GTP; it reads RVR. Position 272 (Cys-272) interacts with [4Fe-4S] cluster.

This sequence belongs to the radical SAM superfamily. MoaA family. In terms of assembly, monomer and homodimer. Requires [4Fe-4S] cluster as cofactor.

It carries out the reaction GTP + AH2 + S-adenosyl-L-methionine = (8S)-3',8-cyclo-7,8-dihydroguanosine 5'-triphosphate + 5'-deoxyadenosine + L-methionine + A + H(+). It functions in the pathway cofactor biosynthesis; molybdopterin biosynthesis. Functionally, catalyzes the cyclization of GTP to (8S)-3',8-cyclo-7,8-dihydroguanosine 5'-triphosphate. The sequence is that of GTP 3',8-cyclase from Mesorhizobium japonicum (strain LMG 29417 / CECT 9101 / MAFF 303099) (Mesorhizobium loti (strain MAFF 303099)).